The sequence spans 177 residues: Phycocyanin PC645 beta subunit (177 aa).

Y18 serves as a coordination point for mesobiliverdin. K28, N35, and D39 together coordinate (2R,3E)-phycocyanobilin. Residues C50, D54, and C61 each coordinate 15,16-dihydrobiliverdin. Residues N72, R77, C82, R84, and D85 each contribute to the (2R,3E)-phycocyanobilin site. Q148 is a binding site for 15,16-dihydrobiliverdin. (2R,3E)-phycocyanobilin-binding residues include P154, G156, and C158.

It belongs to the phycobiliprotein family. Heterotetramer of 2 different alpha chains and 2 identical beta chains which form 2 alpha-beta heterodimers within the heterotetramer. Post-translationally, contains two phycocyanobilin chromophores, one mesobiliverdin chromophore and one 15,16-dihydrobiliverdin chromophore with binding mediated by both the alpha and beta subunits.

The protein localises to the plastid. It localises to the chloroplast thylakoid membrane. Functionally, light-harvesting photosynthetic tetrapyrrole chromophore-protein from the phycobiliprotein complex. This Chroomonas sp. (strain CCMP270) protein is Phycocyanin PC645 beta subunit.